Consider the following 505-residue polypeptide: Glutamate--tRNA ligase (505 aa).

The 'HIGH' region motif lies at 16–26; the sequence is PSPTGFPHVGT. A 'KMSKS' region motif is present at residues 257–261; sequence KLSKR. K260 provides a ligand contact to ATP.

This sequence belongs to the class-I aminoacyl-tRNA synthetase family. Glutamate--tRNA ligase type 1 subfamily. Monomer.

It is found in the cytoplasm. It catalyses the reaction tRNA(Glu) + L-glutamate + ATP = L-glutamyl-tRNA(Glu) + AMP + diphosphate. Its function is as follows. Catalyzes the attachment of glutamate to tRNA(Glu) in a two-step reaction: glutamate is first activated by ATP to form Glu-AMP and then transferred to the acceptor end of tRNA(Glu). This Psychrobacter sp. (strain PRwf-1) protein is Glutamate--tRNA ligase.